The primary structure comprises 236 residues: uncharacterized protein (236 aa).

The span at M1 to K17 shows a compositional bias: polar residues. Residues M1–I94 form a disordered region. Residues S18 to L35 show a composition bias toward low complexity. In terms of domain architecture, Collagen-like spans G58–G91.

It belongs to the sputnik virus V6 family.

This is an uncharacterized protein from Sputnik virophage.